The primary structure comprises 161 residues: Phosphopantetheine adenylyltransferase (161 aa).

A substrate-binding site is contributed by serine 9. Residues 9–10 and histidine 17 contribute to the ATP site; that span reads SF. Substrate contacts are provided by lysine 41, leucine 73, and arginine 87. ATP contacts are provided by residues 88–90, glutamate 98, and 123–129; these read GIR and TGFISST.

Belongs to the bacterial CoaD family. Homohexamer. It depends on Mg(2+) as a cofactor.

The protein resides in the cytoplasm. The enzyme catalyses (R)-4'-phosphopantetheine + ATP + H(+) = 3'-dephospho-CoA + diphosphate. It functions in the pathway cofactor biosynthesis; coenzyme A biosynthesis; CoA from (R)-pantothenate: step 4/5. Its function is as follows. Reversibly transfers an adenylyl group from ATP to 4'-phosphopantetheine, yielding dephospho-CoA (dPCoA) and pyrophosphate. The sequence is that of Phosphopantetheine adenylyltransferase from Psychromonas ingrahamii (strain DSM 17664 / CCUG 51855 / 37).